The primary structure comprises 260 residues: 23S rRNA (guanosine-2'-O-)-methyltransferase RlmB (260 aa).

S-adenosyl-L-methionine is bound by residues Gly-197, Ile-217, and Leu-226.

Belongs to the class IV-like SAM-binding methyltransferase superfamily. RNA methyltransferase TrmH family. RlmB subfamily.

Its subcellular location is the cytoplasm. The enzyme catalyses guanosine(2251) in 23S rRNA + S-adenosyl-L-methionine = 2'-O-methylguanosine(2251) in 23S rRNA + S-adenosyl-L-homocysteine + H(+). In terms of biological role, specifically methylates the ribose of guanosine 2251 in 23S rRNA. The sequence is that of 23S rRNA (guanosine-2'-O-)-methyltransferase RlmB from Nitrosomonas europaea (strain ATCC 19718 / CIP 103999 / KCTC 2705 / NBRC 14298).